Consider the following 223-residue polypeptide: Deoxyribose-phosphate aldolase (223 aa).

Asp-92 acts as the Proton donor/acceptor in catalysis. Lys-158 acts as the Schiff-base intermediate with acetaldehyde in catalysis. Lys-188 serves as the catalytic Proton donor/acceptor.

This sequence belongs to the DeoC/FbaB aldolase family. DeoC type 1 subfamily.

The protein localises to the cytoplasm. The enzyme catalyses 2-deoxy-D-ribose 5-phosphate = D-glyceraldehyde 3-phosphate + acetaldehyde. It functions in the pathway carbohydrate degradation; 2-deoxy-D-ribose 1-phosphate degradation; D-glyceraldehyde 3-phosphate and acetaldehyde from 2-deoxy-alpha-D-ribose 1-phosphate: step 2/2. In terms of biological role, catalyzes a reversible aldol reaction between acetaldehyde and D-glyceraldehyde 3-phosphate to generate 2-deoxy-D-ribose 5-phosphate. In Mycobacterium avium (strain 104), this protein is Deoxyribose-phosphate aldolase.